A 287-amino-acid chain; its full sequence is MPDRRTLLLTVLAMLAFAGNSLLCRAALKDTAIDAVSFTALRLFSGALMLAVLLHLRRRPATPARGGWRGAAALFVYAAAFSYAYVQLDAGTGALLLFGAVQVTLLLAGLLRGERLGGQALLGFLLALGGLLFLLLPGASAPPLGGALLMLLSGLAWGLYTLLGRGGGDPLAVSAGNFLRALAFAALLLLAFHGQLRLDGAGLAYALLSGALASGLGYAVWYSALPGLTAIQGASVQLSVPVLAALCGALLLGEPLAPRLPPATLAVLGGIALILAPRLGRAAREGA.

The next 10 helical transmembrane spans lie at 7–28, 32–54, 67–86, 91–113, 120–139, 144–163, 170–192, 202–224, 231–253, and 263–280; these read LLLT…RAAL, AIDA…AVLL, GWRG…YAYV, GTGA…LLRG, ALLG…LPGA, LGGA…YTLL, PLAV…LLAF, GLAY…WYSA, IQGA…LLLG, and ATLA…PRLG. EamA domains follow at residues 15 to 136 and 155 to 276; these read LAFA…FLLL and LAWG…LILA.

The protein resides in the cell membrane. This is an uncharacterized protein from Pseudomonas aeruginosa (strain ATCC 15692 / DSM 22644 / CIP 104116 / JCM 14847 / LMG 12228 / 1C / PRS 101 / PAO1).